Here is an 894-residue protein sequence, read N- to C-terminus: Probable ion channel SYM8 (894 aa).

Residues 1-124 (MAKSNEEPNS…PPSLPIAITK (124 aa)) are disordered. Composition is skewed to polar residues over residues 7–16 (EPNSNLNTNK), 24–33 (TLAQQPSLNL), and 44–63 (IGNS…QRNY). 4 consecutive transmembrane segments (helical) span residues 134 to 154 (SPIF…SAFL), 204 to 224 (TISL…YKYI), 267 to 287 (LALL…LYAV), and 319 to 339 (IVSV…LGLV). 2 RCK N-terminal domains span residues 360–501 (RNHV…ETVV) and 620–769 (PEKI…DKSI). A coiled-coil region spans residues 390–415 (VIVVLAEKEKEEMEMDIAKLEFDFMG).

Belongs to the castor/pollux (TC 1.A.1.23) family. Homotetramer.

The protein localises to the nucleus membrane. Functionally, required for both rhizobial and mycorrhizal symbiosis. Involved in Nod-factor-induced calcium spiking. May induce a change in membrane polarization that activates the opening of a calcium channel required for calcium spiking. Might be calcium gated. The chain is Probable ion channel SYM8 (SYM8) from Pisum sativum (Garden pea).